A 238-amino-acid polypeptide reads, in one-letter code: DnaA regulatory inactivator Hda (238 aa).

This sequence belongs to the DnaA family. HdA subfamily. In terms of assembly, the active form seems to be an ADP-bound monomer. Forms the RIDA complex (regulatory inactivation of DnaA) of ATP-DnaA, ADP-Hda and the DNA-loaded beta sliding clamp (dnaN).

Its function is as follows. Mediates the interaction of DNA replication initiator protein DnaA with DNA polymerase subunit beta sliding clamp (dnaN). Stimulates hydrolysis of ATP-DnaA to ADP-DnaA, rendering DnaA inactive for reinitiation, a process called regulatory inhibition of DnaA or RIDA. The polypeptide is DnaA regulatory inactivator Hda (Pectobacterium atrosepticum (strain SCRI 1043 / ATCC BAA-672) (Erwinia carotovora subsp. atroseptica)).